We begin with the raw amino-acid sequence, 324 residues long: D-alanine--D-alanine ligase (324 aa).

The ATP-grasp domain maps to 121–321; it reads NQYLKAFGVR…IKDVMTDIIE (201 aa). 149–204 provides a ligand contact to ATP; the sequence is VEKIGLPCFIKPNLGGSSFGVTKVKTREQIQPAIAKAFSEAEEVMIEAFMGGTELT. Mg(2+)-binding residues include Asp-275, Glu-288, and Asn-290.

The protein belongs to the D-alanine--D-alanine ligase family. The cofactor is Mg(2+). Mn(2+) serves as cofactor.

Its subcellular location is the cytoplasm. The enzyme catalyses 2 D-alanine + ATP = D-alanyl-D-alanine + ADP + phosphate + H(+). It functions in the pathway cell wall biogenesis; peptidoglycan biosynthesis. Cell wall formation. This Bacteroides fragilis (strain ATCC 25285 / DSM 2151 / CCUG 4856 / JCM 11019 / LMG 10263 / NCTC 9343 / Onslow / VPI 2553 / EN-2) protein is D-alanine--D-alanine ligase.